A 215-amino-acid polypeptide reads, in one-letter code: Pentapeptide repeat protein QnrB4 (215 aa).

Pentapeptide repeat domains follow at residues threonine 25–asparagine 104 and isoleucine 117–aspartate 191.

It belongs to the pentapeptide repeat protein family.

Functionally, probably plays a role in resistance to quinolone antibiotics. Only inhibits ATP-dependent DNA supercoiling by E.coli gyrase at high concentration (30 uM). Protects E.coli gyrase supercoiling activity from inhibition by fluoroquinolones (ciprofloxacin) at 0.1 uM, does not protect M.tuberculosis gyrase activity. This chain is Pentapeptide repeat protein QnrB4, found in Escherichia coli.